Reading from the N-terminus, the 180-residue chain is Thiol:disulfide interchange protein TxlA homolog (180 aa).

Residues 10–26 form a helical membrane-spanning segment; it reads LLAVVAIALSAAVYLGF. One can recognise a Thioredoxin domain in the interval 34–143; that stretch reads SLEAQAQRAI…LEQNITALVA (110 aa). C64 and C67 are oxidised to a cystine.

Belongs to the thioredoxin family.

The protein resides in the cell membrane. In terms of biological role, required for disulfide bond formation in some proteins. Acts by transferring its disulfide bond to other proteins and is reduced in the process. This Synechocystis sp. (strain ATCC 27184 / PCC 6803 / Kazusa) protein is Thiol:disulfide interchange protein TxlA homolog (txlA).